Consider the following 239-residue polypeptide: MAGHSKWANIQHRKGRQDEKRGKIWTRIIREITVAARTGGGDPSANPRLRLAIDKAKAANMPADRIKYNIDKASGTLEGVSYEEIRYEGYGIGGAAIIVDTMTDNRVRTVAEVRHAFSKYGGNMGTEGSVAFQFKNVGQIIFAPGTSEDKVMEVALEAGAEDVITDDEGAIEVLTAPGDFEAVRDALGAAGLQPEVAEVTMRPENTIALEGDDVARMQKLLDMIEDLDDVQEVYHNAEL.

A disordered region spans residues 1–21 (MAGHSKWANIQHRKGRQDEKR).

Belongs to the TACO1 family.

The protein resides in the cytoplasm. The sequence is that of Probable transcriptional regulatory protein Ajs_1898 from Acidovorax sp. (strain JS42).